Reading from the N-terminus, the 506-residue chain is Maturase K (506 aa).

This sequence belongs to the intron maturase 2 family. MatK subfamily.

The protein localises to the plastid. It is found in the chloroplast. Usually encoded in the trnK tRNA gene intron. Probably assists in splicing its own and other chloroplast group II introns. The polypeptide is Maturase K (Trifolium subterraneum (Subterranean clover)).